Here is a 346-residue protein sequence, read N- to C-terminus: Methionine import ATP-binding protein MetN (346 aa).

One can recognise an ABC transporter domain in the interval 2-243; sequence VRFEGISKTY…PKHPITQSFL (242 aa). ATP is bound at residue 40–47; that stretch reads GRSGAGKS.

Belongs to the ABC transporter superfamily. Methionine importer (TC 3.A.1.24) family. As to quaternary structure, the complex is composed of two ATP-binding proteins (MetN), two transmembrane proteins (MetI) and a solute-binding protein (MetQ).

It localises to the cell inner membrane. It carries out the reaction L-methionine(out) + ATP + H2O = L-methionine(in) + ADP + phosphate + H(+). The enzyme catalyses D-methionine(out) + ATP + H2O = D-methionine(in) + ADP + phosphate + H(+). Part of the ABC transporter complex MetNIQ involved in methionine import. Responsible for energy coupling to the transport system. This chain is Methionine import ATP-binding protein MetN, found in Bradyrhizobium diazoefficiens (strain JCM 10833 / BCRC 13528 / IAM 13628 / NBRC 14792 / USDA 110).